We begin with the raw amino-acid sequence, 119 residues long: Large ribosomal subunit protein uL24 (119 aa).

This sequence belongs to the universal ribosomal protein uL24 family. As to quaternary structure, part of the 50S ribosomal subunit.

Its function is as follows. One of two assembly initiator proteins, it binds directly to the 5'-end of the 23S rRNA, where it nucleates assembly of the 50S subunit. Located at the polypeptide exit tunnel on the outside of the subunit. This chain is Large ribosomal subunit protein uL24, found in Methanococcus maripaludis (strain C5 / ATCC BAA-1333).